A 143-amino-acid polypeptide reads, in one-letter code: Fluoride-specific ion channel FluC (143 aa).

The next 4 helical transmembrane spans lie at 6 to 26, 38 to 58, 70 to 90, and 103 to 123; these read CILV…VSVL, TILI…LTLA, LFVM…SLQT, and MVNV…GHVV. Positions 78 and 81 each coordinate Na(+).

This sequence belongs to the fluoride channel Fluc/FEX (TC 1.A.43) family.

It localises to the cell inner membrane. It carries out the reaction fluoride(in) = fluoride(out). Na(+) is not transported, but it plays an essential structural role and its presence is essential for fluoride channel function. Its function is as follows. Fluoride-specific ion channel. Important for reducing fluoride concentration in the cell, thus reducing its toxicity. The chain is Fluoride-specific ion channel FluC from Methylobacterium radiotolerans (strain ATCC 27329 / DSM 1819 / JCM 2831 / NBRC 15690 / NCIMB 10815 / 0-1).